We begin with the raw amino-acid sequence, 342 residues long: Molybdate/tungstate-binding protein WtpA (342 aa).

A signal peptide spans 1–24 (MHIGGGVVKIRILILLMLALFLLG). Molybdate contacts are provided by residues 41 to 42 (GS), serine 70, 153 to 155 (DPC), glutamate 218, and tyrosine 236. Tungstate-binding positions include 41–42 (GS), serine 70, 153–155 (DPC), glutamate 218, and tyrosine 236.

It belongs to the bacterial solute-binding protein 1 family. WtpA subfamily. The complex is composed of two ATP-binding proteins (WtpC), two transmembrane proteins (WtpB) and a solute-binding protein (WtpA).

The protein resides in the cell membrane. Part of the ABC transporter complex WtpABC involved in molybdate/tungstate import. Binds tungstate and molybdate. The sequence is that of Molybdate/tungstate-binding protein WtpA (wtpA) from Archaeoglobus fulgidus (strain ATCC 49558 / DSM 4304 / JCM 9628 / NBRC 100126 / VC-16).